Here is a 518-residue protein sequence, read N- to C-terminus: Trigger factor (518 aa).

Positions 170–255 constitute a PPIase FKBP-type domain; it reads GDVVVIDFVG…VKGLESPQEA (86 aa). The segment at 447 to 518 is disordered; sequence EAPAKPAKKA…AKKAAAKKDA (72 aa). Composition is skewed to basic residues over residues 452–468 and 501–518; these read PAKK…KKAA and PAAK…KKDA.

This sequence belongs to the FKBP-type PPIase family. Tig subfamily.

It is found in the cytoplasm. It catalyses the reaction [protein]-peptidylproline (omega=180) = [protein]-peptidylproline (omega=0). Functionally, involved in protein export. Acts as a chaperone by maintaining the newly synthesized protein in an open conformation. Functions as a peptidyl-prolyl cis-trans isomerase. This is Trigger factor from Maricaulis maris (strain MCS10) (Caulobacter maris).